A 378-amino-acid polypeptide reads, in one-letter code: Cysteine endopeptidase RepA (378 aa).

The N-terminal stretch at Met1–Ala24 is a signal peptide. Residues Ile25–Asp141 constitute a propeptide, activation peptide. 3 cysteine pairs are disulfide-bonded: Cys164-Cys206, Cys198-Cys239, and Cys297-Cys350. Residue Cys167 is part of the active site. Residues His303 and Asn324 contribute to the active site.

Belongs to the peptidase C1 family.

The protein resides in the protein storage vacuole. Cysteine endopeptidase that digests in vitro both the acidic and basic subunits of glutelin, the major seed storage protein of rice. This is Cysteine endopeptidase RepA from Oryza sativa subsp. japonica (Rice).